The primary structure comprises 212 residues: Deoxyribose-phosphate aldolase (212 aa).

The active-site Proton donor/acceptor is Asp-90. Catalysis depends on Lys-151, which acts as the Schiff-base intermediate with acetaldehyde. Catalysis depends on Lys-176, which acts as the Proton donor/acceptor.

This sequence belongs to the DeoC/FbaB aldolase family. DeoC type 1 subfamily.

It localises to the cytoplasm. It carries out the reaction 2-deoxy-D-ribose 5-phosphate = D-glyceraldehyde 3-phosphate + acetaldehyde. It participates in carbohydrate degradation; 2-deoxy-D-ribose 1-phosphate degradation; D-glyceraldehyde 3-phosphate and acetaldehyde from 2-deoxy-alpha-D-ribose 1-phosphate: step 2/2. Its function is as follows. Catalyzes a reversible aldol reaction between acetaldehyde and D-glyceraldehyde 3-phosphate to generate 2-deoxy-D-ribose 5-phosphate. In Halobacterium salinarum (strain ATCC 29341 / DSM 671 / R1), this protein is Deoxyribose-phosphate aldolase.